The primary structure comprises 189 residues: GTP cyclohydrolase 1 (189 aa).

3 residues coordinate Zn(2+): Cys78, His81, and Cys150.

The protein belongs to the GTP cyclohydrolase I family. In terms of assembly, homomer.

The enzyme catalyses GTP + H2O = 7,8-dihydroneopterin 3'-triphosphate + formate + H(+). It functions in the pathway cofactor biosynthesis; 7,8-dihydroneopterin triphosphate biosynthesis; 7,8-dihydroneopterin triphosphate from GTP: step 1/1. The chain is GTP cyclohydrolase 1 from Bacillus mycoides (strain KBAB4) (Bacillus weihenstephanensis).